The sequence spans 377 residues: Erythronate-4-phosphate dehydrogenase (377 aa).

Substrate-binding residues include Ser-45 and Thr-67. NAD(+)-binding positions include 127-128 (QV), Asp-147, and Thr-176. Arg-209 is a catalytic residue. Asp-233 is a binding site for NAD(+). Glu-238 is a catalytic residue. Catalysis depends on His-255, which acts as the Proton donor. Gly-258 contributes to the NAD(+) binding site. Substrate is bound at residue Tyr-259.

This sequence belongs to the D-isomer specific 2-hydroxyacid dehydrogenase family. PdxB subfamily. In terms of assembly, homodimer.

Its subcellular location is the cytoplasm. The catalysed reaction is 4-phospho-D-erythronate + NAD(+) = (R)-3-hydroxy-2-oxo-4-phosphooxybutanoate + NADH + H(+). It functions in the pathway cofactor biosynthesis; pyridoxine 5'-phosphate biosynthesis; pyridoxine 5'-phosphate from D-erythrose 4-phosphate: step 2/5. Its function is as follows. Catalyzes the oxidation of erythronate-4-phosphate to 3-hydroxy-2-oxo-4-phosphonooxybutanoate. This Vibrio vulnificus (strain CMCP6) protein is Erythronate-4-phosphate dehydrogenase.